The sequence spans 643 residues: Leukocyte immunoglobulin-like receptor subfamily B member 5 (643 aa).

Positions 1-23 (MTLTLSVLICLGLNVGPRTCVQA) are cleaved as a signal peptide. Residues 24 to 458 (GTLPKPTLWA…PQSGLGRHLG (435 aa)) are Extracellular-facing. 4 Ig-like C2-type domains span residues 27–116 (PKPT…LELV), 111–228 (DPLE…SLLI), 224–313 (PSLL…DPLD), and 337–418 (GENV…LVVS). A disulfide bond links cysteine 49 and cysteine 98. Asparagine 139 is a glycosylation site (N-linked (GlcNAc...) asparagine). 2 cysteine pairs are disulfide-bonded: cysteine 144/cysteine 195 and cysteine 244/cysteine 295. N-linked (GlcNAc...) asparagine glycans are attached at residues asparagine 279 and asparagine 339. Cysteine 344 and cysteine 395 form a disulfide bridge. A compositionally biased stretch (low complexity) spans 417-433 (VSGPSGDPSLSPTGSTP). A disordered region spans residues 417-449 (VSGPSGDPSLSPTGSTPTPGPEDQPLTPTGLDP). Residues 459 to 479 (VVTGVSVAFVLLLFLLLFLLL) traverse the membrane as a helical segment. The Cytoplasmic segment spans residues 480–643 (RHRHQSKHRT…PSIYAPLAIH (164 aa)). Residues 493 to 643 (FYRPAGAAGP…PSIYAPLAIH (151 aa)) form a disordered region. Position 514 is a phosphoserine (serine 514). 3 stretches are compositionally biased toward basic and acidic residues: residues 531–549 (TQPK…RDED), 557–567 (EVKHSRPRREM), and 579–592 (LDTK…DRQM). Positions 605–610 (VTYAQL) match the ITIM motif 1 motif. Residues 615-631 (LRREATEPPPSQEREPP) are compositionally biased toward basic and acidic residues. The ITIM motif 2 signature appears at 635 to 640 (SIYAPL).

It is found in the membrane. May act as receptor for class I MHC antigens. This Pan troglodytes (Chimpanzee) protein is Leukocyte immunoglobulin-like receptor subfamily B member 5 (LILRB5).